The following is a 375-amino-acid chain: Metal tolerance protein B (375 aa).

The Cytoplasmic segment spans residues 1-57; that stretch reads MELEQICILKPDDEEEMESPSPSKTEENLGVVPLSCAFTRQEHCVSETKEREESTRR. A helical transmembrane segment spans residues 58–78; it reads LSSLIFLYLIVMSVQIVGGFK. Topologically, residues 79-84 are vacuolar; the sequence is ANSLAV. A helical transmembrane segment spans residues 85–105; it reads MTDAAHLLSDVAGLCVSLLAI. The Cytoplasmic segment spans residues 106-122; the sequence is KVSSWEANPRNSFGFKR. A helical transmembrane segment spans residues 123–143; it reads LEVLAAFLSVQLIWLVSGVII. Over 144-160 the chain is Vacuolar; that stretch reads HEAIQRLLSRSREVNGE. The chain crosses the membrane as a helical span at residues 161 to 181; that stretch reads IMFGISAFGFFMNLVMVLWLG. The tract at residues 182–206 is required for zinc-binding; it reads HNHSHHHHDHHHHHHNHKHQHQHHH. Topologically, residues 182 to 240 are cytoplasmic; sequence HNHSHHHHDHHHHHHNHKHQHQHHHKEVVAEEEEEEMNPLKGEKSSSKEMNINIQGAYL. A helical transmembrane segment spans residues 241 to 261; the sequence is HAMADMIQSLGVMIGGGIIWV. Topologically, residues 262 to 264 are vacuolar; it reads KPK. A helical membrane pass occupies residues 265-285; that stretch reads WVLVDLICTLVFSAFALAATL. At 286 to 375 the chain is on the cytoplasmic side; that stretch reads PILKNIFGIL…YHATVQVESE (90 aa).

The protein belongs to the cation diffusion facilitator (CDF) transporter (TC 2.A.4) family. SLC30A subfamily.

It localises to the vacuole membrane. Involved in sequestration of excess zinc in the cytoplasm into vacuoles to maintain zinc homeostasis. This chain is Metal tolerance protein B (MTPB), found in Arabidopsis thaliana (Mouse-ear cress).